The chain runs to 181 residues: Gastrokine-3 (181 aa).

The N-terminal stretch at 1 to 20 (MKHLVASSILGVFVLTPSLA) is a signal peptide. The 93-residue stretch at 53–145 (NNIFSEWDGI…MCRDDPTYFA (93 aa)) folds into the BRICHOS domain. A disulfide bridge connects residues C80 and C137.

Belongs to the gastrokine family.

It is found in the secreted. May inhibit gastric epithelial cell proliferation. This chain is Gastrokine-3 (GKN3P), found in Homo sapiens (Human).